The primary structure comprises 338 residues: PRAQPAPAQPRVAPPPGGAPGAARAGGAARRGDSSTAASRVPGPEDATQAGSGPGPAEPSSEDPPPSRSPGPERASLCPAGGGPGEALSPSGGLRPNGQTKPLPALKLALEYIVPCMNKHGICVVDDFLGRETGQQIGDEVRALHDTGKFTDGQLVSQKSDSSKDIRGDKITWIEGKEPGCETIGLLMSSMDDLIRHCSGKLGNYRINGRTKAMVACYPGNGTGYVRHVDNPNGDGRCVTCIYYLNKDWDAKVSGGILRIFPEGKAQFADIEPKFDRLLFFWSDRRNPHEVQPAYATRYAITVWYFDADERARAKVKYLTGEKGVRVELKPNSVSKDV.

The span at 1–11 shows a compositional bias: low complexity; sequence PRAQPAPAQPR. Residues 1 to 99 form a disordered region; it reads PRAQPAPAQP…PSGGLRPNGQ (99 aa). Position 52 is a phosphoserine (serine 52). Cysteine 116 and cysteine 123 each carry S-nitrosocysteine. A beta(2)beta(3) 'finger-like' loop region spans residues 156 to 166; that stretch reads VSQKSDSSKDI. The Fe2OG dioxygenase domain maps to 209–307; sequence GRTKAMVACY…RYAITVWYFD (99 aa). S-nitrosocysteine is present on cysteine 217. Residues histidine 228 and aspartate 230 each contribute to the Fe cation site. 2 positions are modified to S-nitrosocysteine: cysteine 238 and cysteine 241. A Fe cation-binding site is contributed by histidine 289. Arginine 298 contributes to the 2-oxoglutarate binding site.

Monomer. Interacts with ING4; the interaction inhibits the hydroxylation of HIF alpha proteins. Interacts with PTGES3 (via PXLE motif); thereby recruiting EGLN1 to the HSP90 pathway to facilitate HIF alpha proteins hydroxylation. Interacts with LIMD1. Found in a complex composed of LIMD1, VHL, EGLN1/PHD2, ELOB and CUL2. Interacts with EPAS1. Interacts with CBFA2T3 and HIF1A. Requires Fe(2+) as cofactor. L-ascorbate is required as a cofactor. In terms of processing, S-nitrosylation inhibits the enzyme activity up to 60% under aerobic conditions. Chelation of Fe(2+) has no effect on the S-nitrosylation. It is uncertain whether nitrosylation occurs on Cys-238 or Cys-241. Expressed in heart, liver, kidney, brain, liver and testis. Highest levels in heart, lowest in liver.

Its subcellular location is the cytoplasm. It localises to the nucleus. It catalyses the reaction L-prolyl-[hypoxia-inducible factor alpha subunit] + 2-oxoglutarate + O2 = trans-4-hydroxy-L-prolyl-[hypoxia-inducible factor alpha subunit] + succinate + CO2. Increased activation in hypoxia. Hydroxylation of the C-terminal ODD domain (CODD) proline of HIF1A is activated by cyclosporin A (CsA). In terms of biological role, cellular oxygen sensor that catalyzes, under normoxic conditions, the post-translational formation of 4-hydroxyproline in hypoxia-inducible factor (HIF) alpha proteins. Hydroxylates a specific proline found in each of the oxygen-dependent degradation (ODD) domains (N-terminal, NODD, and C-terminal, CODD) of HIF1A. Also hydroxylates HIF2A. Has a preference for the CODD site for both HIF1A and HIF1B. Hydroxylated HIFs are then targeted for proteasomal degradation via the von Hippel-Lindau ubiquitination complex. Under hypoxic conditions, the hydroxylation reaction is attenuated allowing HIFs to escape degradation resulting in their translocation to the nucleus, heterodimerization with HIF1B, and increased expression of hypoxy-inducible genes. EGLN1 is the most important isozyme under normoxia and, through regulating the stability of HIF1, involved in various hypoxia-influenced processes such as angiogenesis in retinal and cardiac functionality. Target proteins are preferentially recognized via a LXXLAP motif. The sequence is that of Egl nine homolog 1 (Egln1) from Rattus norvegicus (Rat).